A 444-amino-acid chain; its full sequence is MSQSYINVIGAGLAGSEAAYQIAERGIPVKLYEMRGVKSTPQHKTDNFAELVCSNSLRGDALTNAVGLLKEEMRRLGSVILESAEATRVPAGGALAVDRDGFSQMVTEKVVNHPLIEVVRDEITELPTDVITVVATGPLTSDALAEKIHALNNGDGFYFYDAAAPIIDVNTIDMSKVYLKSRYDKGEAAYLNAPMTKQEFMDFHEALVNAEEAPLNSFEKEKYFEGCMPIEVMAKRGIKTMLYGPMKPVGLEYPDDYTGPRDGEFKTPYAVVQLRQDNAAGSLYNIVGFQTHLKWGEQKRVFQMIPGLENAEFVRYGVMHRNSYMDSPNLLEQTYRSKKQPNLFFAGQMTGVEGYVESAASGLVAGINAARLFKEESEAIFPETTAIGSLAHYITHADSKHFQPMNVNFGIIKELEGERIRDKKARYEKIAERALADLEEFLTV.

Residue Gly10–Gly15 coordinates FAD.

The protein belongs to the MnmG family. TrmFO subfamily. The cofactor is FAD.

The protein localises to the cytoplasm. It catalyses the reaction uridine(54) in tRNA + (6R)-5,10-methylene-5,6,7,8-tetrahydrofolate + NADH + H(+) = 5-methyluridine(54) in tRNA + (6S)-5,6,7,8-tetrahydrofolate + NAD(+). The catalysed reaction is uridine(54) in tRNA + (6R)-5,10-methylene-5,6,7,8-tetrahydrofolate + NADPH + H(+) = 5-methyluridine(54) in tRNA + (6S)-5,6,7,8-tetrahydrofolate + NADP(+). Catalyzes the folate-dependent formation of 5-methyl-uridine at position 54 (M-5-U54) in all tRNAs. This chain is Methylenetetrahydrofolate--tRNA-(uracil-5-)-methyltransferase TrmFO, found in Streptococcus pneumoniae (strain 70585).